The sequence spans 264 residues: Rhodanese-like domain-containing protein 4A, chloroplastic (264 aa).

The N-terminal 60 residues, 1 to 60, are a transit peptide targeting the chloroplast; that stretch reads MTSLPIILASSPLRNLTKPCSTSQIPKPIQNSTKQPPIHLLTKTNLSVTISQLIITSPVL. The helical transmembrane segment at 95–115 threads the bilayer; the sequence is FFVAGCTFTYLVVYPAVMFYL. The region spanning 132–232 is the Rhodanese domain; that stretch reads NESDSQLLDI…ARGKNGWLAI (101 aa).

It is found in the plastid. The protein resides in the chloroplast. The protein localises to the membrane. This Arabidopsis thaliana (Mouse-ear cress) protein is Rhodanese-like domain-containing protein 4A, chloroplastic (STR4A).